Here is a 414-residue protein sequence, read N- to C-terminus: Nuclear localization sequence-binding protein (414 aa).

Disordered stretches follow at residues 1 to 172 (MAKT…TIFV), 244 to 264 (STSK…TPSE), and 336 to 414 (RPVR…KTFD). Basic and acidic residues predominate over residues 10–26 (NKKEVKASKQAKEEKAK). Low complexity-rich tracts occupy residues 27 to 44 (AVSS…SSSE) and 54 to 73 (ESSS…SSSD). Positions 78–87 (AETKKEESKD) are enriched in basic and acidic residues. Serine 93, serine 95, serine 96, serine 97, serine 116, serine 127, serine 129, serine 131, and serine 143 each carry phosphoserine. Acidic residues predominate over residues 96–105 (SSDEEEEEEK). Basic and acidic residues predominate over residues 106–117 (EETKKEESKESS). Over residues 118 to 128 (SSDSSSSSSSD) the composition is skewed to low complexity. The segment covering 134-144 (EESNDKKRKSE) has biased composition (basic and acidic residues). RRM domains lie at 168–246 (ATIF…MSTS) and 267–345 (DTLF…FSSP). A compositionally biased stretch (gly residues) spans 351–386 (GGRGGSRGFGGRGGGRGGNRGFGGRGGARGGRGGFR). Arginine 353 is subject to Omega-N-methylarginine. The RGG-box stretch occupies residues 353–384 (RGGSRGFGGRGGGRGGNRGFGGRGGARGGRGG). Arginine 357, arginine 362, and arginine 366 each carry asymmetric dimethylarginine; by HMT1; alternate. Omega-N-methylarginine; by HMT1; alternate is present on residues arginine 357, arginine 362, and arginine 366. The segment at 366–384 (RGGNRGFGGRGGARGGRGG) is RNA-binding RGG-box. The residue at position 370 (arginine 370) is an Omega-N-methylarginine. 3 positions are modified to asymmetric dimethylarginine; by HMT1; alternate: arginine 375, arginine 379, and arginine 382. 3 positions are modified to omega-N-methylarginine; by HMT1; alternate: arginine 375, arginine 379, and arginine 382. Arginine 386 bears the Omega-N-methylarginine mark.

Belongs to the RRM GAR family. Post-translationally, methylated by HMT1, forming asymmetric dimethylarginines (DMA) within a domain referred to as an RGG box, made up of repeated Gly-Gly dipeptides interspersed with Arg and aromatic residues. Pyrophosphorylated by 5-diphosphoinositol pentakisphosphate (5-IP7). Serine pyrophosphorylation is achieved by Mg(2+)-dependent, but enzyme independent transfer of a beta-phosphate from a inositol pyrophosphate to a pre-phosphorylated serine residue.

The protein resides in the nucleus. It localises to the nucleolus. Involved in pre-rRNA processing. Specifically binds nuclear localization sequences. Candidate for a receptor at the nucleus that may be involved in both RNA and protein transport. Binds telomeric sequences of the type (TG[1-3])n in vitro. The polypeptide is Nuclear localization sequence-binding protein (Saccharomyces cerevisiae (strain ATCC 204508 / S288c) (Baker's yeast)).